We begin with the raw amino-acid sequence, 344 residues long: Deoxyhypusine hydroxylase (344 aa).

HEAT-like PBS-type repeat units follow at residues leucine 81–aspartate 107 and arginine 115–arginine 140. Fe cation contacts are provided by histidine 83, glutamate 84, histidine 116, and glutamate 117. Positions glutamate 169–glycine 188 are disordered. 3 HEAT-like PBS-type repeats span residues lysine 210–glycine 240, phenylalanine 248–asparagine 274, and valine 281–aspartate 308. The Fe cation site is built by histidine 250, glutamate 251, histidine 283, and glutamate 284.

The protein belongs to the deoxyhypusine hydroxylase family. It depends on Fe(2+) as a cofactor.

The protein localises to the cytoplasm. Its subcellular location is the nucleus. The catalysed reaction is [eIF5A protein]-deoxyhypusine + AH2 + O2 = [eIF5A protein]-hypusine + A + H2O. Its pathway is protein modification; eIF5A hypusination. Catalyzes the hydroxylation of the N(6)-(4-aminobutyl)-L-lysine intermediate to form hypusine, an essential post-translational modification only found in mature eIF-5A factor. This chain is Deoxyhypusine hydroxylase, found in Chaetomium globosum (strain ATCC 6205 / CBS 148.51 / DSM 1962 / NBRC 6347 / NRRL 1970) (Soil fungus).